A 608-amino-acid polypeptide reads, in one-letter code: Glutamyl-tRNA(Gln) amidotransferase subunit E (608 aa).

Belongs to the GatB/GatE family. GatE subfamily. In terms of assembly, heterodimer of GatD and GatE.

It catalyses the reaction L-glutamyl-tRNA(Gln) + L-glutamine + ATP + H2O = L-glutaminyl-tRNA(Gln) + L-glutamate + ADP + phosphate + H(+). Allows the formation of correctly charged Gln-tRNA(Gln) through the transamidation of misacylated Glu-tRNA(Gln) in organisms which lack glutaminyl-tRNA synthetase. The reaction takes place in the presence of glutamine and ATP through an activated gamma-phospho-Glu-tRNA(Gln). The GatDE system is specific for glutamate and does not act on aspartate. The sequence is that of Glutamyl-tRNA(Gln) amidotransferase subunit E from Pyrobaculum aerophilum (strain ATCC 51768 / DSM 7523 / JCM 9630 / CIP 104966 / NBRC 100827 / IM2).